The following is a 78-amino-acid chain: Acyl carrier protein (78 aa).

The region spanning 2 to 77 is the Carrier domain; sequence STIEERVKKI…AAIDYVNSHK (76 aa). Ser-37 carries the O-(pantetheine 4'-phosphoryl)serine modification.

This sequence belongs to the acyl carrier protein (ACP) family. 4'-phosphopantetheine is transferred from CoA to a specific serine of apo-ACP by AcpS. This modification is essential for activity because fatty acids are bound in thioester linkage to the sulfhydryl of the prosthetic group.

It is found in the cytoplasm. The protein operates within lipid metabolism; fatty acid biosynthesis. Its function is as follows. Carrier of the growing fatty acid chain in fatty acid biosynthesis. This chain is Acyl carrier protein, found in Pseudomonas putida (strain GB-1).